The sequence spans 562 residues: Oxygen-dependent choline dehydrogenase (562 aa).

4–33 (DYIIIGAGSAGNVLATRLTEDPNTTVLLLE) is an FAD binding site. Catalysis depends on His-473, which acts as the Proton acceptor.

It belongs to the GMC oxidoreductase family. The cofactor is FAD.

It carries out the reaction choline + A = betaine aldehyde + AH2. The catalysed reaction is betaine aldehyde + NAD(+) + H2O = glycine betaine + NADH + 2 H(+). It participates in amine and polyamine biosynthesis; betaine biosynthesis via choline pathway; betaine aldehyde from choline (cytochrome c reductase route): step 1/1. Involved in the biosynthesis of the osmoprotectant glycine betaine. Catalyzes the oxidation of choline to betaine aldehyde and betaine aldehyde to glycine betaine at the same rate. The polypeptide is Oxygen-dependent choline dehydrogenase (Escherichia coli O45:K1 (strain S88 / ExPEC)).